The primary structure comprises 391 residues: Thyroid hormone receptor alpha-B (391 aa).

Residues 1–32 (MAQWPEKEEEEQPMFGEEYTGYIPSYLEKDEP) form a modulating region. 2 consecutive NR C4-type zinc fingers follow at residues 33-53 (CVVC…CEGC) and 71-95 (CKYD…FKKC). Positions 33–100 (CVVCGDKATG…RFKKCIAVGM (68 aa)) form a DNA-binding region, nuclear receptor. Positions 143 to 388 (AEWELIRMVT…PPLFLEVFED (246 aa)) constitute an NR LBD domain.

This sequence belongs to the nuclear hormone receptor family. NR1 subfamily.

The protein localises to the nucleus. In terms of biological role, high affinity receptor for triiodothyronine. The polypeptide is Thyroid hormone receptor alpha-B (thra2) (Paralichthys olivaceus (Bastard halibut)).